The primary structure comprises 371 residues: Surface protein P12p (371 aa).

Residues 1–20 (MHIVSFIIFFFALFFPISIC) form the signal peptide. 2 6-Cys domains span residues 23–168 (INGV…LKKN) and 169–343 (ILYG…FSNQ). Disulfide bonds link Cys27-Cys62, Cys76-Cys144, Cys93-Cys142, and Cys173-Cys245. Asn184 carries N-linked (GlcNAc...) asparagine glycosylation. The segment at 202–239 (GNNNNDDDNNDDDNNNDNNNNDNNNNNNNNNNNNNNNN) is disordered. Positions 206–216 (NDDDNNDDDNN) are enriched in acidic residues. Residues 217-239 (NDNNNNDNNNNNNNNNNNNNNNN) are compositionally biased toward low complexity. 2 N-linked (GlcNAc...) asparagine glycosylation sites follow: Asn242 and Asn246. 2 disulfides stabilise this stretch: Cys260–Cys323 and Cys271–Cys321.

It is found in the cell surface. It localises to the cell membrane. This Plasmodium falciparum (isolate 3D7) protein is Surface protein P12p (PFS12P).